The primary structure comprises 373 residues: Erythronate-4-phosphate dehydrogenase (373 aa).

Substrate-binding residues include S45 and T67. NAD(+)-binding positions include D147, 206 to 208, and D232; that span reads ASR. R208 is an active-site residue. The active site involves E237. Catalysis depends on H254, which acts as the Proton donor. G257 provides a ligand contact to NAD(+). Y258 is a substrate binding site.

It belongs to the D-isomer specific 2-hydroxyacid dehydrogenase family. PdxB subfamily. Homodimer.

The protein localises to the cytoplasm. The catalysed reaction is 4-phospho-D-erythronate + NAD(+) = (R)-3-hydroxy-2-oxo-4-phosphooxybutanoate + NADH + H(+). Its pathway is cofactor biosynthesis; pyridoxine 5'-phosphate biosynthesis; pyridoxine 5'-phosphate from D-erythrose 4-phosphate: step 2/5. Its function is as follows. Catalyzes the oxidation of erythronate-4-phosphate to 3-hydroxy-2-oxo-4-phosphonooxybutanoate. In Tolumonas auensis (strain DSM 9187 / NBRC 110442 / TA 4), this protein is Erythronate-4-phosphate dehydrogenase.